Consider the following 253-residue polypeptide: uncharacterized protein (253 aa).

Residues 1 to 15 form the signal peptide; it reads MNRVILFHFHFFKNA.

This is an uncharacterized protein from Archaeoglobus fulgidus (strain ATCC 49558 / DSM 4304 / JCM 9628 / NBRC 100126 / VC-16).